The sequence spans 107 residues: Nucleoid-associated protein Mmar10_0436 (107 aa).

Belongs to the YbaB/EbfC family. As to quaternary structure, homodimer.

The protein resides in the cytoplasm. It localises to the nucleoid. Binds to DNA and alters its conformation. May be involved in regulation of gene expression, nucleoid organization and DNA protection. This Maricaulis maris (strain MCS10) (Caulobacter maris) protein is Nucleoid-associated protein Mmar10_0436.